The primary structure comprises 265 residues: Orotidine 5'-phosphate decarboxylase (265 aa).

Substrate-binding positions include D38, 60-62 (KTH), 91-100 (DRKFADIGNT), Y213, and R232. The active-site Proton donor is K93.

It belongs to the OMP decarboxylase family.

It catalyses the reaction orotidine 5'-phosphate + H(+) = UMP + CO2. Its pathway is pyrimidine metabolism; UMP biosynthesis via de novo pathway; UMP from orotate: step 2/2. This is Orotidine 5'-phosphate decarboxylase (pyrG) from Mucor circinelloides f. lusitanicus (Mucor racemosus var. lusitanicus).